Consider the following 277-residue polypeptide: 3-methyl-2-oxobutanoate hydroxymethyltransferase (277 aa).

Residues D42 and D81 each contribute to the Mg(2+) site. Residues D42–S43, D81, and K110 each bind 3-methyl-2-oxobutanoate. E112 serves as a coordination point for Mg(2+). E179 functions as the Proton acceptor in the catalytic mechanism.

The protein belongs to the PanB family. In terms of assembly, homodecamer; pentamer of dimers. Mg(2+) serves as cofactor.

The protein localises to the cytoplasm. It carries out the reaction 3-methyl-2-oxobutanoate + (6R)-5,10-methylene-5,6,7,8-tetrahydrofolate + H2O = 2-dehydropantoate + (6S)-5,6,7,8-tetrahydrofolate. It functions in the pathway cofactor biosynthesis; (R)-pantothenate biosynthesis; (R)-pantoate from 3-methyl-2-oxobutanoate: step 1/2. Its function is as follows. Catalyzes the reversible reaction in which hydroxymethyl group from 5,10-methylenetetrahydrofolate is transferred onto alpha-ketoisovalerate to form ketopantoate. This Anaplasma marginale (strain Florida) protein is 3-methyl-2-oxobutanoate hydroxymethyltransferase.